A 406-amino-acid chain; its full sequence is Haptoglobin (406 aa).

Positions Met1 to Ala18 are cleaved as a signal peptide. Sushi domains are found at residues Asp31–Ala88 and Asp90–Ala147. Cystine bridges form between Cys52–Cys86, Cys111–Cys145, Cys149–Cys266, Cys309–Cys340, and Cys351–Cys381. In terms of domain architecture, Peptidase S1 spans Ile162–Ala404. Asn184 is a glycosylation site (N-linked (GlcNAc...) (complex) asparagine). Residues Asn207 and Asn211 are each glycosylated (N-linked (GlcNAc...) asparagine). Asn241 carries N-linked (GlcNAc...) (complex) asparagine glycosylation. Positions Val318 to Thr323 are interaction with CD163.

This sequence belongs to the peptidase S1 family. Tetramer of two alpha and two beta chains; disulfide-linked. The hemoglobin/haptoglobin complex is composed of a haptoglobin dimer bound to two hemoglobin alpha-beta dimers. Interacts with CD163. Interacts with ERGIC3. Expressed by the liver and secreted in plasma.

It is found in the secreted. Its function is as follows. As a result of hemolysis, hemoglobin is found to accumulate in the kidney and is secreted in the urine. Haptoglobin captures, and combines with free plasma hemoglobin to allow hepatic recycling of heme iron and to prevent kidney damage. Haptoglobin also acts as an antioxidant, has antibacterial activity, and plays a role in modulating many aspects of the acute phase response. Hemoglobin/haptoglobin complexes are rapidly cleared by the macrophage CD163 scavenger receptor expressed on the surface of liver Kupfer cells through an endocytic lysosomal degradation pathway. The uncleaved form of allele alpha-2 (2-2), known as zonulin, plays a role in intestinal permeability, allowing intercellular tight junction disassembly, and controlling the equilibrium between tolerance and immunity to non-self antigens. This chain is Haptoglobin (HP), found in Homo sapiens (Human).